A 65-amino-acid chain; its full sequence is Large ribosomal subunit protein uL29 (65 aa).

Belongs to the universal ribosomal protein uL29 family.

The chain is Large ribosomal subunit protein uL29 from Bacteroides fragilis (strain ATCC 25285 / DSM 2151 / CCUG 4856 / JCM 11019 / LMG 10263 / NCTC 9343 / Onslow / VPI 2553 / EN-2).